A 519-amino-acid chain; its full sequence is Signal transduction histidine-protein kinase/phosphatase MprB (519 aa).

Residues 1–26 are Cytoplasmic-facing; that stretch reads MVRFAWRRRASLRATSSLSLRWRVML. A helical transmembrane segment spans residues 27-47; that stretch reads LAMSMVAMVVVLMAFAVYVVI. At 48-163 the chain is on the extracellular side; that stretch reads SAALYSDIDN…PTEAVMTKLR (116 aa). A helical transmembrane segment spans residues 164–184; the sequence is WVLLIVGSLGVAVAAVAGGMV. The Cytoplasmic segment spans residues 185–519; that stretch reads TRAGLRPVGR…SVDYQSARAR (335 aa). The 53-residue stretch at 186 to 238 folds into the HAMP domain; the sequence is RAGLRPVGRLTEAAERVARTDDLRPIPVFGSDELARLTEAFNLMLRALAESRE. The region spanning 246–466 is the Histidine kinase domain; the sequence is DAGHELRTPL…SIYVLLPGRP (221 aa). Residue histidine 249 is modified to Phosphohistidine; by autocatalysis.

It depends on Mg(2+) as a cofactor. Mn(2+) is required as a cofactor. Autophosphorylated.

The protein resides in the cell membrane. The enzyme catalyses ATP + protein L-histidine = ADP + protein N-phospho-L-histidine.. Its function is as follows. Member of the two-component regulatory system MprB/MprA which contributes to maintaining a balance among several systems involved in stress resistance and is required for establishment and maintenance of persistent infection in the host. In response to environmental signals MprB acts both as a membrane-associated protein kinase that undergoes autophosphorylation and subsequently transfers the phosphate to MprA, and a protein phosphatase that dephosphorylates phospho-MprA. This chain is Signal transduction histidine-protein kinase/phosphatase MprB (mprB), found in Mycobacterium leprae (strain TN).